A 377-amino-acid chain; its full sequence is Pseudouridylate synthase RPUSD4, mitochondrial (377 aa).

The N-terminal 15 residues, 1-15, are a transit peptide targeting the mitochondrion; it reads MAAPRWSASGPWIRG. The stretch at 36 to 62 forms a coiled coil; that stretch reads AASTAINAQRLAEKLRAQKREQDTKKE. Aspartate 153 is a catalytic residue.

The protein belongs to the pseudouridine synthase RluA family. Interacts with 16S mt-rRNA, mt-tRNA(Phe) and mt-tRNA(Met). Forms a regulatory protein-RNA complex, consisting of RCC1L, NGRN, RPUSD3, RPUSD4, TRUB2, FASTKD2 and 16S mt-rRNA.

Its subcellular location is the mitochondrion matrix. The protein resides in the nucleus. The protein localises to the cytoplasm. It catalyses the reaction uridine in 5S rRNA = pseudouridine in 5S rRNA. The enzyme catalyses a uridine in tRNA = a pseudouridine in tRNA. The catalysed reaction is a uridine in mRNA = a pseudouridine in mRNA. Functionally, catalyzes uridine to pseudouridine isomerization (pseudouridylation) of different mitochondrial RNA substrates. Acts on position 1397 in 16S mitochondrial ribosomal RNA (16S mt-rRNA). This modification is required for the assembly of 16S mt-rRNA into a functional mitochondrial ribosome. As a component of a functional protein-RNA module, consisting of RCC1L, NGRN, RPUSD3, RPUSD4, TRUB2, FASTKD2 and 16S mt-rRNA, controls 16S mt-rRNA abundance and is required for intra-mitochondrial translation. Acts on position 39 in mitochondrial tRNA(Phe). Also catalyzes pseudouridylation of mRNAs in nucleus: acts as a regulator of pre-mRNA splicing by mediating pseudouridylation of pre-mRNAs at locations associated with alternatively spliced regions. Pseudouridylation of pre-mRNAs near splice sites directly regulates mRNA splicing and mRNA 3'-end processing. The chain is Pseudouridylate synthase RPUSD4, mitochondrial from Homo sapiens (Human).